We begin with the raw amino-acid sequence, 121 residues long: Small ribosomal subunit protein uS13 (121 aa).

Positions Arg-92–Lys-121 are disordered.

Belongs to the universal ribosomal protein uS13 family. As to quaternary structure, part of the 30S ribosomal subunit. Forms a loose heterodimer with protein S19. Forms two bridges to the 50S subunit in the 70S ribosome.

In terms of biological role, located at the top of the head of the 30S subunit, it contacts several helices of the 16S rRNA. In the 70S ribosome it contacts the 23S rRNA (bridge B1a) and protein L5 of the 50S subunit (bridge B1b), connecting the 2 subunits; these bridges are implicated in subunit movement. Contacts the tRNAs in the A and P-sites. The sequence is that of Small ribosomal subunit protein uS13 from Oceanobacillus iheyensis (strain DSM 14371 / CIP 107618 / JCM 11309 / KCTC 3954 / HTE831).